The sequence spans 448 residues: Glutamyl-tRNA reductase (448 aa).

Substrate is bound by residues 48–51, S100, 105–107, and Q111; these read TCNR and EDQ. C49 (nucleophile) is an active-site residue. 180–185 serves as a coordination point for NADP(+); the sequence is GAGEIG.

This sequence belongs to the glutamyl-tRNA reductase family. As to quaternary structure, homodimer.

It catalyses the reaction (S)-4-amino-5-oxopentanoate + tRNA(Glu) + NADP(+) = L-glutamyl-tRNA(Glu) + NADPH + H(+). It functions in the pathway porphyrin-containing compound metabolism; protoporphyrin-IX biosynthesis; 5-aminolevulinate from L-glutamyl-tRNA(Glu): step 1/2. Catalyzes the NADPH-dependent reduction of glutamyl-tRNA(Glu) to glutamate 1-semialdehyde (GSA). In Methanosarcina mazei (strain ATCC BAA-159 / DSM 3647 / Goe1 / Go1 / JCM 11833 / OCM 88) (Methanosarcina frisia), this protein is Glutamyl-tRNA reductase.